A 451-amino-acid chain; its full sequence is Phosphoglucosamine mutase (451 aa).

Catalysis depends on Ser107, which acts as the Phosphoserine intermediate. Mg(2+)-binding residues include Ser107, Asp246, Asp248, and Asp250. Residue Ser107 is modified to Phosphoserine.

The protein belongs to the phosphohexose mutase family. It depends on Mg(2+) as a cofactor. Activated by phosphorylation.

It carries out the reaction alpha-D-glucosamine 1-phosphate = D-glucosamine 6-phosphate. Functionally, catalyzes the conversion of glucosamine-6-phosphate to glucosamine-1-phosphate. In Burkholderia cenocepacia (strain HI2424), this protein is Phosphoglucosamine mutase.